Consider the following 1340-residue polypeptide: Pleckstrin homology domain-containing family G member 2 (1340 aa).

Positions 34–44 are enriched in polar residues; it reads TPTAQAATTMA. The tract at residues 34–76 is disordered; the sequence is TPTAQAATTMASPRGSGSSTSLSTVGSEGDPSPACSASRPEPL. Positions 45 to 62 are enriched in low complexity; the sequence is SPRGSGSSTSLSTVGSEG. Positions 98-279 constitute a DH domain; that stretch reads RLERVAREIV…TAVAWYINDM (182 aa). Residues 309-407 enclose the PH domain; that stretch reads ELVLEGTFRG…WIHCLQRLFF (99 aa). Disordered stretches follow at residues 431 to 623, 684 to 743, 820 to 855, 907 to 979, 991 to 1028, 1047 to 1069, and 1125 to 1146; these read PKSK…IPCI, LPGP…SVQG, MQRA…EAEP, NVSD…PSAG, TTSL…EQRD, PVCT…STDF, and PLSS…SLTD. Position 441 is a phosphothreonine (Thr-441). Phosphoserine occurs at positions 446 and 465. Positions 560–572 are enriched in basic and acidic residues; it reads DIPKFPRDSRVPV. The span at 588–600 shows a compositional bias: acidic residues; that stretch reads SEEEEEEDLETDE. Polar residues-rich tracts occupy residues 703-714, 820-831, 907-921, 930-945, and 956-972; these read SGSNPGRLSESP, MQRAETRASTNA, NVSD…SSNS, GQSN…TSLL, and PTAS…SQVP. Residues 1049–1059 are compositionally biased toward polar residues; the sequence is CTSSPDQQIPA. Position 1215 is a phosphothreonine (Thr-1215). Phosphoserine occurs at positions 1219 and 1269. A disordered region spans residues 1250-1340; that stretch reads RRQGPGGEGT…VGPSQGPGGS (91 aa). The segment covering 1276–1288 has biased composition (pro residues); it reads PSPPPQPQPPAPP. A compositionally biased stretch (low complexity) spans 1319–1333; sequence HPALLAAPHPGAVGP.

In terms of tissue distribution, expressed in thymus, skeletal muscle, lung, testis, uterus, pancreas and heart and also expressed during embryogenesis.

In terms of biological role, may be a transforming oncogene with exchange activity for CDC42. May be a guanine-nucleotide exchange factor (GEF) for RAC1 and CDC42. Activated by the binding to subunits beta and gamma of the heterotrimeric guanine nucleotide-binding protein (G protein). Involved in the regulation of actin polymerization. The protein is Pleckstrin homology domain-containing family G member 2 (Plekhg2) of Mus musculus (Mouse).